Consider the following 316-residue polypeptide: Meiotically up-regulated gene 154 protein (316 aa).

The next 4 helical transmembrane spans lie at 41–61 (YSIPFSLAVNFIFLLMRIYIK), 88–108 (AFLSFLSICFLFISFLNFIFS), 159–179 (FLLNFACLFSPAHALILWFYS), and 186–206 (LLTFLLSFTTLHFVNKFSLLL). Residues 291–316 (HDSGISRDSSSPFKRFPHLSDGSSRF) form a disordered region.

The protein localises to the endoplasmic reticulum membrane. Has a role in meiosis. This is Meiotically up-regulated gene 154 protein (mug154) from Schizosaccharomyces pombe (strain 972 / ATCC 24843) (Fission yeast).